The following is a 315-amino-acid chain: 4-hydroxy-3-methylbut-2-enyl diphosphate reductase (315 aa).

Position 12 (Cys-12) interacts with [4Fe-4S] cluster. (2E)-4-hydroxy-3-methylbut-2-enyl diphosphate is bound by residues His-41 and His-74. Positions 41 and 74 each coordinate dimethylallyl diphosphate. Positions 41 and 74 each coordinate isopentenyl diphosphate. Position 96 (Cys-96) interacts with [4Fe-4S] cluster. Residue His-124 coordinates (2E)-4-hydroxy-3-methylbut-2-enyl diphosphate. A dimethylallyl diphosphate-binding site is contributed by His-124. His-124 lines the isopentenyl diphosphate pocket. Glu-126 acts as the Proton donor in catalysis. Position 168 (Thr-168) interacts with (2E)-4-hydroxy-3-methylbut-2-enyl diphosphate. Cys-198 is a binding site for [4Fe-4S] cluster. (2E)-4-hydroxy-3-methylbut-2-enyl diphosphate-binding residues include Ser-226, Ser-227, Asn-228, and Ser-270. Dimethylallyl diphosphate contacts are provided by Ser-226, Ser-227, Asn-228, and Ser-270. Residues Ser-226, Ser-227, Asn-228, and Ser-270 each contribute to the isopentenyl diphosphate site.

This sequence belongs to the IspH family. The cofactor is [4Fe-4S] cluster.

The catalysed reaction is isopentenyl diphosphate + 2 oxidized [2Fe-2S]-[ferredoxin] + H2O = (2E)-4-hydroxy-3-methylbut-2-enyl diphosphate + 2 reduced [2Fe-2S]-[ferredoxin] + 2 H(+). It carries out the reaction dimethylallyl diphosphate + 2 oxidized [2Fe-2S]-[ferredoxin] + H2O = (2E)-4-hydroxy-3-methylbut-2-enyl diphosphate + 2 reduced [2Fe-2S]-[ferredoxin] + 2 H(+). The protein operates within isoprenoid biosynthesis; dimethylallyl diphosphate biosynthesis; dimethylallyl diphosphate from (2E)-4-hydroxy-3-methylbutenyl diphosphate: step 1/1. Its pathway is isoprenoid biosynthesis; isopentenyl diphosphate biosynthesis via DXP pathway; isopentenyl diphosphate from 1-deoxy-D-xylulose 5-phosphate: step 6/6. Its function is as follows. Catalyzes the conversion of 1-hydroxy-2-methyl-2-(E)-butenyl 4-diphosphate (HMBPP) into a mixture of isopentenyl diphosphate (IPP) and dimethylallyl diphosphate (DMAPP). Acts in the terminal step of the DOXP/MEP pathway for isoprenoid precursor biosynthesis. The polypeptide is 4-hydroxy-3-methylbut-2-enyl diphosphate reductase (Pseudomonas syringae pv. syringae (strain B728a)).